The chain runs to 392 residues: ATP phosphoribosyltransferase regulatory subunit (392 aa).

This sequence belongs to the class-II aminoacyl-tRNA synthetase family. HisZ subfamily. Heteromultimer composed of HisG and HisZ subunits.

It is found in the cytoplasm. It participates in amino-acid biosynthesis; L-histidine biosynthesis; L-histidine from 5-phospho-alpha-D-ribose 1-diphosphate: step 1/9. Required for the first step of histidine biosynthesis. May allow the feedback regulation of ATP phosphoribosyltransferase activity by histidine. This Marinomonas sp. (strain MWYL1) protein is ATP phosphoribosyltransferase regulatory subunit.